The sequence spans 222 residues: Collectrin (222 aa).

The signal sequence occupies residues 1-14; the sequence is MLWLLFFLVTAIHA. At 15–141 the chain is on the extracellular side; the sequence is DLCRPDAENA…LAPPTDPSVP (127 aa). In terms of domain architecture, Collectrin-like spans 21-222; sequence AENAFKVRLS…VTEDERLTPL (202 aa). Residues Asn76 and Asn93 are each glycosylated (N-linked (GlcNAc...) asparagine). The helical transmembrane segment at 142 to 162 threads the bilayer; it reads IWIIIFGVIFCIVLVATMLLI. Residues 163–222 lie on the Cytoplasmic side of the membrane; it reads ISGIRQHRRKNKGPSEMEDSEDKCENVITIENGIPCDPLDMKGGHINDAFVTEDERLTPL. Thr214 and Thr220 each carry phosphothreonine.

This sequence belongs to the CLTRN family. As to quaternary structure, monomer. Homodimer; dimerization prevents CLTRN cleavage by BACE2. Interacts with SLC6A18; this interaction regulates the trafficking of SLC6A18 to the cell membrane and its amino acid transporter activity. Interacts with SLC6A19; this interaction regulates the trafficking of SLC6A19 to the cell membrane and its amino acid transporter activity. Interacts with SNAPIN. In terms of processing, glycosylated. Glycosylation is required for plasma membrane localization and for its cleavage by BACE2. Post-translationally, proteolytically processed in pancreatic beta cells by BACE2 leading to the generation and extracellular release of soluble CLTRN, and a corresponding cell-associated C-terminal fragment which is later cleaved by gamma-secretase. This shedding process inactivates CLTRN. Three cleavage sites have been identified for BACE2, two clustered sites after Phe-116 and Leu-118 and a more membrane proximal site at Phe-125; the preferred BACE2 cleavage site seems to be between Phe-125 and Leu-126, Phe-116 and Leu-118 act as alternative sites.

It localises to the cell membrane. Functionally, plays an important role in amino acid transport by acting as binding partner of amino acid transporters SLC6A18 and SLC6A19, regulating their trafficking on the cell surface and their activity. May also play a role in trafficking of amino acid transporters SLC3A1 and SLC7A9 to the renal cortical cell membrane. Regulator of SNARE complex function. Stimulator of beta cell replication. The chain is Collectrin (CLTRN) from Bos taurus (Bovine).